We begin with the raw amino-acid sequence, 213 residues long: Thymidylate kinase (213 aa).

Position 10–17 (G10–T17) interacts with ATP.

Belongs to the thymidylate kinase family.

The catalysed reaction is dTMP + ATP = dTDP + ADP. Phosphorylation of dTMP to form dTDP in both de novo and salvage pathways of dTTP synthesis. This Salmonella dublin (strain CT_02021853) protein is Thymidylate kinase.